A 1117-amino-acid chain; its full sequence is Zinc finger E-box-binding homeobox 1 (1117 aa).

2 disordered regions span residues Met-1–Asp-103 and Ala-122–Pro-143. Residues Pro-15–Asn-30 show a composition bias toward low complexity. Phosphoserine is present on residues Ser-31 and Ser-33. A C2H2-type 1 zinc finger spans residues Leu-150 to His-173. Residues Lys-166 and Lys-175 each participate in a glycyl lysine isopeptide (Lys-Gly) (interchain with G-Cter in SUMO2) cross-link. C2H2-type zinc fingers lie at residues Phe-180 to His-202 and Phe-220 to His-242. The C2H2-type 4; atypical zinc-finger motif lies at Tyr-248–Cys-272. The segment at Val-278–Gln-307 is disordered. Residue Lys-287 forms a Glycyl lysine isopeptide (Lys-Gly) (interchain with G-Cter in SUMO2) linkage. The span at Thr-288–Thr-304 shows a compositional bias: low complexity. Ser-293 and Ser-302 each carry phosphoserine. Glycyl lysine isopeptide (Lys-Gly) (interchain with G-Cter in SUMO2) cross-links involve residues Lys-311 and Lys-315. Residue Lys-327 forms a Glycyl lysine isopeptide (Lys-Gly) (interchain with G-Cter in SUMO); alternate linkage. Lys-327 is covalently cross-linked (Glycyl lysine isopeptide (Lys-Gly) (interchain with G-Cter in SUMO2); alternate). Glycyl lysine isopeptide (Lys-Gly) (interchain with G-Cter in SUMO2) cross-links involve residues Lys-419, Lys-473, Lys-484, Lys-495, and Lys-528. Disordered regions lie at residues Ile-476–Ser-501, Lys-528–Pro-566, and Gly-613–Asn-687. Residues Lys-484–Ser-501 are compositionally biased toward basic and acidic residues. A DNA-binding region (homeobox; atypical) is located at residues Asp-559–Gln-618. A phosphoserine mark is found at Ser-657, Ser-664, Ser-671, and Ser-678. Positions Met-673–Asn-687 are enriched in polar residues. Thr-680 is subject to Phosphothreonine. Ser-682 carries the post-translational modification Phosphoserine. Lys-752 participates in a covalent cross-link: Glycyl lysine isopeptide (Lys-Gly) (interchain with G-Cter in SUMO); alternate. A Glycyl lysine isopeptide (Lys-Gly) (interchain with G-Cter in SUMO2); alternate cross-link involves residue Lys-752. Positions Pro-834–Lys-876 are disordered. A compositionally biased stretch (polar residues) spans Ser-852–Thr-868. 2 C2H2-type zinc fingers span residues Tyr-882 to His-904 and His-910 to His-932. The C2H2-type 7; atypical zinc-finger motif lies at Tyr-938–His-959. A disordered region spans residues Glu-991–Ala-1117. Composition is skewed to acidic residues over residues Glu-1013–Leu-1032, Gln-1042–Glu-1069, and Ser-1098–Leu-1109.

The protein belongs to the delta-EF1/ZFH-1 C2H2-type zinc-finger family. As to quaternary structure, interacts (via N-terminus) with SMARCA4/BRG1. Post-translationally, ubiquitinated, leading to degradation in a proteasome-dependent manner. Deubiquitinated by USP51, leading to stabilization. As to expression, expressed in the external germinal layer (EGL) and internal granular layer (IGL) of the cerebellum (at protein level).

It localises to the nucleus. Acts as a transcriptional repressor. Binds to E-box sequences in the immunoglobulin heavy chain enhancer as well as in the regulatory regions of many other tissue-specific genes. Represses E-cadherin promoter and induces an epithelial-mesenchymal transition (EMT) by recruiting SMARCA4/BRG1. Represses BCL6 transcription in the presence of the corepressor CTBP1. Positively regulates neuronal differentiation. Represses RCOR1 transcription activation during neurogenesis. Represses transcription by binding to the E box (5'-CANNTG-3'). In the absence of TGFB1, acts as a repressor of COL1A2 transcription via binding to the E-box in the upstream enhancer region. Promotes tumorigenicity by repressing stemness-inhibiting microRNAs. The sequence is that of Zinc finger E-box-binding homeobox 1 from Mus musculus (Mouse).